The primary structure comprises 345 residues: Arginase (345 aa).

The span at 1–16 (MKETAAAKFERQHMDS) shows a compositional bias: basic and acidic residues. The interval 1–34 (MKETAAAKFERQHMDSPDLGTDDDDKMSPATSPF) is disordered. Residues Ile-101, His-124, Ser-126, Gly-128, Ile-232, and Cys-234 each contribute to the Mn(2+) site.

Belongs to the arginase family. In terms of assembly, homotrimer. The cofactor is Mn(2+).

It carries out the reaction L-arginine + H2O = urea + L-ornithine. Its pathway is nitrogen metabolism; urea cycle; L-ornithine and urea from L-arginine: step 1/1. Its activity is regulated as follows. The enzyme activity is increased in the range of 20-50% upon the addition of Mn(2+) (1 mM), Co(2+) (1 mM), Ni(2+) (1 and 5 mM) and K(+) (5 mM). In contrast, the addition of Cu(2+), Zn(2+), Ca(2+), Mg(2+), Fe(2+) (both 1 and 5 mM), and Co(2+) (5 mM) strongly suppresses the arginase activity. SDS (1%) and EDTA (1 mM) are the most potent inhibitors. Reducing agents DTT (1 mM), PMSF (1 mM) and beta-mercaptoethanol (1 mM) also significantly inhibit activity by 85%, 64% and 35%, respectively. Surfactants Triton X-100 (1%), Tween-80 (1%) and Tween-20 (1%) are more tolerant, showing a slight decrease of arginase activity in the range of 10-30%. In terms of biological role, cold-active L-arginase that catalyzes the hydrolysis of L-arginine to L-ornithine and urea, an essential reaction in the urea cycle for toxic ammonia removal and cell proliferation. Is not able to use D-arginine or L-canavanine as substrates. This is Arginase from Glaciozyma antarctica (strain PI12) (Antarctic psychrophilic yeast).